Here is a 332-residue protein sequence, read N- to C-terminus: Protoheme IX farnesyltransferase (332 aa).

7 consecutive transmembrane segments (helical) span residues 63-83, 109-129, 132-152, 160-180, 188-208, 245-265, and 286-306; these read LICTLGGGALAAAAAGALNCL, TVFLGAVSCTFAAAMLLISGV, LAAGLTLLGLCSYVILYTIIL, IVFGGVAGAIPPLVGASAATG, WLFGLVMLWTPAHFWALAILL, ILGVFALPEGGLLYVIMLLPF, and AKGLFRWSILYMFGICLLLLI.

The protein belongs to the UbiA prenyltransferase family. Protoheme IX farnesyltransferase subfamily.

The protein localises to the cell inner membrane. It catalyses the reaction heme b + (2E,6E)-farnesyl diphosphate + H2O = Fe(II)-heme o + diphosphate. The protein operates within porphyrin-containing compound metabolism; heme O biosynthesis; heme O from protoheme: step 1/1. Converts heme B (protoheme IX) to heme O by substitution of the vinyl group on carbon 2 of heme B porphyrin ring with a hydroxyethyl farnesyl side group. The protein is Protoheme IX farnesyltransferase of Prochlorococcus marinus (strain MIT 9515).